Reading from the N-terminus, the 120-residue chain is Large ribosomal subunit protein uL18c (120 aa).

It belongs to the universal ribosomal protein uL18 family. In terms of assembly, part of the 50S ribosomal subunit; contacts the 5S rRNA.

It localises to the plastid. Its subcellular location is the chloroplast. Functionally, binds 5S rRNA, forms part of the central protuberance of the 50S subunit. The polypeptide is Large ribosomal subunit protein uL18c (rpl18) (Pyropia yezoensis (Susabi-nori)).